Reading from the N-terminus, the 568-residue chain is Vacuolar protein 8 (568 aa).

Gly-2 carries the N-myristoyl glycine lipid modification. S-palmitoyl cysteine attachment occurs at residues Cys-4, Cys-5, and Cys-7. ARM repeat units lie at residues 37–74, 75–114, 116–155, 157–196, 198–237, 241–280, 282–321, 323–363, and 407–446; these read DKDN…FAEI, TEKY…NLAV, NENK…NLAT, DDNK…NMTH, GENR…NIAV, NRRK…NLAS, TGYQ…NISI, PLNE…NLAA, and DNSK…NLCS.

This sequence belongs to the beta-catenin family.

It localises to the vacuole membrane. In terms of biological role, functions in both vacuole inheritance and protein targeting from the cytoplasm to vacuole. The chain is Vacuolar protein 8 (VAC8) from Eremothecium gossypii (strain ATCC 10895 / CBS 109.51 / FGSC 9923 / NRRL Y-1056) (Yeast).